We begin with the raw amino-acid sequence, 155 residues long: Phosphopantetheine adenylyltransferase (155 aa).

This sequence belongs to the eukaryotic CoaD family.

The protein resides in the cytoplasm. The enzyme catalyses (R)-4'-phosphopantetheine + ATP + H(+) = 3'-dephospho-CoA + diphosphate. It participates in cofactor biosynthesis; coenzyme A biosynthesis. Reversibly transfers an adenylyl group from ATP to 4'-phosphopantetheine, yielding dephospho-CoA (dPCoA) and pyrophosphate. In Pyrobaculum aerophilum (strain ATCC 51768 / DSM 7523 / JCM 9630 / CIP 104966 / NBRC 100827 / IM2), this protein is Phosphopantetheine adenylyltransferase.